We begin with the raw amino-acid sequence, 1179 residues long: Protein turtle homolog A (1179 aa).

Positions 1–20 (MVWCLGLAVLSLVISQGADG) are cleaved as a signal peptide. The Extracellular portion of the chain corresponds to 21-734 (RGKPEVVSVV…TQLPGLLPQP (714 aa)). 5 consecutive Ig-like domains span residues 24-124 (PEVV…DFAN), 136-216 (PQFQ…GSAT), 226-318 (PPVI…AYLT), 322-410 (PAQV…SPVT), and 418-502 (PAFI…TNVY). Cystine bridges form between cysteine 41/cysteine 108, cysteine 158/cysteine 206, cysteine 248/cysteine 301, cysteine 344/cysteine 395, and cysteine 440/cysteine 486. N-linked (GlcNAc...) asparagine glycosylation is found at asparagine 188 and asparagine 256. 2 Fibronectin type-III domains span residues 507–611 (SPHV…TTPA) and 623–718 (PLSP…TSGL). 2 N-linked (GlcNAc...) asparagine glycosylation sites follow: asparagine 513 and asparagine 524. Positions 606–626 (LPTTPAAPGLPPTEIPPPLSP) are disordered. Positions 613–626 (PGLPPTEIPPPLSP) are enriched in pro residues. The helical transmembrane segment at 735 to 755 (VLAGVVGGVCFLGVAVLVSIL) threads the bilayer. At 756–1179 (AGCLLNRRRA…VPHPEQATLL (424 aa)) the chain is on the cytoplasmic side. Disordered regions lie at residues 767–919 (RRRR…PLPG), 940–988 (DWPP…VVGA), and 1015–1079 (AAPR…KRRN). The segment covering 785–800 (GKSAAPSALGSGSPDS) has biased composition (low complexity). Serine 809 is subject to Phosphoserine. Composition is skewed to pro residues over residues 826 to 836 (TPSPHPDPPSS) and 906 to 919 (VAPP…PLPG). At threonine 972 the chain carries Phosphothreonine. Residues 1177-1179 (TLL) carry the PDZ-binding motif.

This sequence belongs to the immunoglobulin superfamily. Turtle family. In terms of assembly, interacts with MAGI2 and SHANK1.

It localises to the cell membrane. The protein resides in the synapse. In terms of biological role, functions in dendrite outgrowth and synapse maturation. This is Protein turtle homolog A (IGSF9) from Homo sapiens (Human).